The sequence spans 718 residues: Acetolactate synthase, mitochondrial (718 aa).

Disordered regions lie at residues 1–50 (MLTR…APVY) and 72–101 (RKIQSSASTAAASPAVRPQPAQHFQAAPQP). Positions 32–45 (RYSNNIHTSSTQNA) are enriched in polar residues. The span at 76–99 (SSASTAAASPAVRPQPAQHFQAAP) shows a compositional bias: low complexity. A thiamine diphosphate-binding site is contributed by Glu-173. Arg-275 is an FAD binding site. The interval 296-327 (IPAKSAQPGHSPYLPSNPLNPSSQPSDPLPGD) is disordered. Residues 306–325 (SPYLPSNPLNPSSQPSDPLP) are compositionally biased toward low complexity. FAD contacts are provided by residues 397-418 (HGSAYANFAMQEADVLIALGVR) and 449-468 (EIQPKNINKIVEAQIPVLGD). The interval 541 to 621 (QHQMWACQYY…VKVLLFNNEF (81 aa)) is thiamine pyrophosphate binding. Residues Asp-592 and Asn-619 each coordinate Mg(2+).

The protein belongs to the TPP enzyme family. Mg(2+) is required as a cofactor. Requires thiamine diphosphate as cofactor.

It localises to the mitochondrion. It carries out the reaction 2 pyruvate + H(+) = (2S)-2-acetolactate + CO2. Its pathway is amino-acid biosynthesis; L-isoleucine biosynthesis; L-isoleucine from 2-oxobutanoate: step 1/4. It participates in amino-acid biosynthesis; L-valine biosynthesis; L-valine from pyruvate: step 1/4. The protein is Acetolactate synthase, mitochondrial (ILV2) of Cryptococcus neoformans var. neoformans serotype D (strain JEC21 / ATCC MYA-565) (Filobasidiella neoformans).